Reading from the N-terminus, the 562-residue chain is NAD-dependent malic enzyme (562 aa).

Tyrosine 101 functions as the Proton donor in the catalytic mechanism. Arginine 154 is a binding site for NAD(+). The Proton acceptor role is filled by lysine 172. A divalent metal cation is bound by residues glutamate 243, aspartate 244, and aspartate 267. NAD(+)-binding residues include aspartate 267 and asparagine 415.

It belongs to the malic enzymes family. As to quaternary structure, homotetramer. It depends on Mg(2+) as a cofactor. Requires Mn(2+) as cofactor.

It catalyses the reaction (S)-malate + NAD(+) = pyruvate + CO2 + NADH. The catalysed reaction is oxaloacetate + H(+) = pyruvate + CO2. This is NAD-dependent malic enzyme from Shewanella woodyi (strain ATCC 51908 / MS32).